Consider the following 163-residue polypeptide: Lipoprotein signal peptidase (163 aa).

Helical transmembrane passes span 11 to 31 (ILIAVFVVIFDQVTKYIIATT), 64 to 84 (MTFFFIITIIILIALVYFFIN), and 88 to 108 (YNLFMQVAISLLFAGALGNFI). Catalysis depends on residues Asp118 and Asp136. A helical transmembrane segment spans residues 131-151 (IFNIADSSLTIGVILIIIALL).

This sequence belongs to the peptidase A8 family.

It localises to the cell membrane. It catalyses the reaction Release of signal peptides from bacterial membrane prolipoproteins. Hydrolyzes -Xaa-Yaa-Zaa-|-(S,diacylglyceryl)Cys-, in which Xaa is hydrophobic (preferably Leu), and Yaa (Ala or Ser) and Zaa (Gly or Ala) have small, neutral side chains.. It functions in the pathway protein modification; lipoprotein biosynthesis (signal peptide cleavage). This protein specifically catalyzes the removal of signal peptides from prolipoproteins. This chain is Lipoprotein signal peptidase, found in Staphylococcus aureus (strain bovine RF122 / ET3-1).